Reading from the N-terminus, the 229-residue chain is Potassium/proton antiporter CemA (229 aa).

The next 4 membrane-spanning stretches (helical) occupy residues F7–F27, L114–L134, I154–I174, and I189–I209.

It belongs to the CemA family.

The protein resides in the plastid. It localises to the chloroplast inner membrane. It carries out the reaction K(+)(in) + H(+)(out) = K(+)(out) + H(+)(in). In terms of biological role, contributes to K(+)/H(+) antiport activity by supporting proton efflux to control proton extrusion and homeostasis in chloroplasts in a light-dependent manner to modulate photosynthesis. Prevents excessive induction of non-photochemical quenching (NPQ) under continuous-light conditions. Indirectly promotes efficient inorganic carbon uptake into chloroplasts. This is Potassium/proton antiporter CemA from Gossypium hirsutum (Upland cotton).